We begin with the raw amino-acid sequence, 223 residues long: Transcription factor bHLH75 (223 aa).

The segment at 58–100 (FPNLLHGNTRRKGNKEESGSKRRRKRSEEEEAMNGDETQKPKD) is disordered. The bHLH domain maps to 110-160 (QATDSHSLAERVRREKINERLKCLQDLVPGCYKAMGMAVMLDVIIDYVRSL).

As to quaternary structure, homodimer. As to expression, expressed in leaves, stems, and flowers.

It localises to the nucleus. The protein is Transcription factor bHLH75 (BHLH75) of Arabidopsis thaliana (Mouse-ear cress).